Here is a 330-residue protein sequence, read N- to C-terminus: MTAGSKVFSNDSVRSSSFKSIKIVIVGAGNVGSTTAFTLLLSGLAAEIVIIDLNKKKAEGEAMDLNHAAPLSHETRVYLGDYKDCKDATAVVITAGKNQKPGETRMDLLKANISIFKEILREVTKYTKDAILLVATNPVDVLTYATLKLTGFPAERVIGSGTIIDTARFQYLIGKLYGLDPQSVNADIIGEHGDSELAVWSHASIAGLSLADFCEESETKYDEQALNECFKETKNAAYDIIQRKGSTEYGVAAGLVRILAAIIRDENALLTVSGLDSYSNIGDVCFSMPRKLNKDGAHRIINAKLSKDEDAKLVESVKSIKHAIESIGLN.

Positions 105, 137, and 168 each coordinate substrate. Residue Asn137 coordinates NAD(+). The Proton acceptor role is filled by His192.

It belongs to the LDH/MDH superfamily. LDH family. As to quaternary structure, homotetramer.

Its subcellular location is the cytoplasm. It catalyses the reaction (S)-lactate + NAD(+) = pyruvate + NADH + H(+). It participates in fermentation; pyruvate fermentation to lactate; (S)-lactate from pyruvate: step 1/1. This is Probable L-lactate dehydrogenase from Schizosaccharomyces pombe (strain 972 / ATCC 24843) (Fission yeast).